A 60-amino-acid polypeptide reads, in one-letter code: Large ribosomal subunit protein bL32 (60 aa).

Belongs to the bacterial ribosomal protein bL32 family.

In Streptococcus mutans serotype c (strain ATCC 700610 / UA159), this protein is Large ribosomal subunit protein bL32.